The sequence spans 144 residues: Large ribosomal subunit protein uL15 (144 aa).

The interval 1 to 53 (MRLNTLSPAEGSKHASKRPGRGIGSGLGKTGGRGHKGQKSRSGGGVRRGFEGG) is disordered. Gly residues predominate over residues 21-31 (RGIGSGLGKTG).

It belongs to the universal ribosomal protein uL15 family. As to quaternary structure, part of the 50S ribosomal subunit.

In terms of biological role, binds to the 23S rRNA. This chain is Large ribosomal subunit protein uL15, found in Sodalis glossinidius (strain morsitans).